Reading from the N-terminus, the 463-residue chain is Bifunctional protein HldE (463 aa).

A ribokinase region spans residues 1–311 (MKQILVVGDL…EEIALILNQT (311 aa)). Residue 191-194 (NRIE) participates in ATP binding. Aspartate 260 is a catalytic residue. Residues 334–463 (FTNGCFDILH…IERIKRTCND (130 aa)) form a cytidylyltransferase region.

It in the N-terminal section; belongs to the carbohydrate kinase PfkB family. The protein in the C-terminal section; belongs to the cytidylyltransferase family. Homodimer.

It catalyses the reaction D-glycero-beta-D-manno-heptose 7-phosphate + ATP = D-glycero-beta-D-manno-heptose 1,7-bisphosphate + ADP + H(+). It carries out the reaction D-glycero-beta-D-manno-heptose 1-phosphate + ATP + H(+) = ADP-D-glycero-beta-D-manno-heptose + diphosphate. It participates in nucleotide-sugar biosynthesis; ADP-L-glycero-beta-D-manno-heptose biosynthesis; ADP-L-glycero-beta-D-manno-heptose from D-glycero-beta-D-manno-heptose 7-phosphate: step 1/4. It functions in the pathway nucleotide-sugar biosynthesis; ADP-L-glycero-beta-D-manno-heptose biosynthesis; ADP-L-glycero-beta-D-manno-heptose from D-glycero-beta-D-manno-heptose 7-phosphate: step 3/4. Its function is as follows. Catalyzes the phosphorylation of D-glycero-D-manno-heptose 7-phosphate at the C-1 position to selectively form D-glycero-beta-D-manno-heptose-1,7-bisphosphate. Functionally, catalyzes the ADP transfer from ATP to D-glycero-beta-D-manno-heptose 1-phosphate, yielding ADP-D-glycero-beta-D-manno-heptose. The polypeptide is Bifunctional protein HldE (Helicobacter pylori (strain Shi470)).